A 460-amino-acid polypeptide reads, in one-letter code: Lysosomal proton-coupled steroid conjugate and bile acid symporter SLC46A3 (460 aa).

Positions 1–25 (MKISFIEPAILLNAFAMTLTIPLTA) are cleaved as a signal peptide. Over 26 to 73 (QYVYRRIWEETGNYTFASNSNGSECDQNKSSSIFAFREEVQKKASLFN) the chain is Extracellular. N-linked (GlcNAc...) asparagine glycosylation is found at asparagine 38, asparagine 46, and asparagine 53. Residues 74-94 (LQVEMSALIPGLVSTFMLLAS) form a helical membrane-spanning segment. Topologically, residues 95–111 (SDNHGRKLPMVLSSLGS) are cytoplasmic. The helical transmembrane segment at 112 to 132 (LGTNTWLCMMSYFDLPLQLLI) threads the bilayer. The Extracellular segment spans residues 133–135 (AST). The helical transmembrane segment at 136–156 (FIGALFGNYTTFWGACFAYIV) threads the bilayer. The Cytoplasmic portion of the chain corresponds to 157 to 170 (DQQKEYKHRIIRIA). A helical transmembrane segment spans residues 171 to 191 (ILDFMLGVVTGLTGLSSGYFI). The Extracellular portion of the chain corresponds to 192–195 (RELG). A helical transmembrane segment spans residues 196–216 (FVWSYFITAMVLIVNLAYILF). Over 217 to 257 (FLNDPIKESSSQIVTMSCIESLKDLFYRTYMLFKNGSSKRQ) the chain is Cytoplasmic. The chain crosses the membrane as a helical span at residues 258–278 (ALLCLLIFTLVIYFFVIIGIS). Over 279-301 (PIFTLYELGPPLCWNEVYIGYGS) the chain is Extracellular. The helical transmembrane segment at 302–322 (ALGSVSFLSSFLGIWLFSYCL) threads the bilayer. At 323 to 324 (KD) the chain is on the cytoplasmic side. Residues 325 to 345 (IHIAYIGIFTTMVGMTLAAFT) form a helical membrane-spanning segment. Over 346–347 (RT) the chain is Extracellular. A helical membrane pass occupies residues 348-368 (TLMMFLVRIPFIFTIMPLSVL). Residues 369-381 (RSMLSKVVHSTEQ) lie on the Cytoplasmic side of the membrane. Residues 382–402 (GALFACIAFLETLAGVTSTSA) traverse the membrane as a helical segment. The Extracellular portion of the chain corresponds to 403-410 (YSGIYSAT). The helical transmembrane segment at 411–431 (VAWYPGFIFLLSAGLLVLPAI) threads the bilayer. Topologically, residues 432-460 (SLCCVKSIGWEEGSYTLLVHEEPSEHTSD) are cytoplasmic. The Tyrosine-based lysosomal-sorting motif motif lies at 446–449 (YTLL).

This sequence belongs to the major facilitator superfamily. SLC46A family. In terms of tissue distribution, expressed in liver, kidney, small intestine and colon.

Its subcellular location is the lysosome membrane. It catalyses the reaction estrone 3-sulfate(out) + n H(+)(out) = estrone 3-sulfate(in) + n H(+)(in). It carries out the reaction 25-hydroxyvitamin D3 sulfate(out) + n H(+)(out) = 25-hydroxyvitamin D3 sulfate(in) + n H(+)(in). The catalysed reaction is cholate(out) + n H(+)(out) = cholate(in) + n H(+)(in). The enzyme catalyses glycocholate(out) + n H(+)(out) = glycocholate(in) + n H(+)(in). It catalyses the reaction taurocholate(out) + n H(+)(out) = taurocholate(in) + n H(+)(in). It carries out the reaction dehydroepiandrosterone 3-sulfate(out) + n H(+)(out) = dehydroepiandrosterone 3-sulfate(in) + n H(+)(in). The catalysed reaction is N-acetyl-D-muramoyl-L-alanyl-D-isoglutamine(out) + n H(+)(out) = N-acetyl-D-muramoyl-L-alanyl-D-isoglutamine(in) + n H(+)(in). The enzyme catalyses 2',3'-cGAMP(out) + n H(+)(out) = 2',3'-cGAMP(in) + n H(+)(in). Its function is as follows. Lysosomal proton-coupled steroid conjugate and bile acid transporter. Preferentially recognizes lipophilic steroid conjugates or bile acis as endogenous substrates and seems to mediate escape from lysosomes to the cytoplasm. Modulates hepatic cytosolic copper homeostasis, maybe acting as a lysosomal copper transporter and sequestering copper ions in the lysosome. Delivers pathogen-associated molecular patterns to cytosolic pattern recognition receptors as part of the innate immune response to microbes. Selectively transports bacterial muramyl dipeptide (MDP) into the cytosol for recognition by NOD2, triggering inflammatory responses. Likely acts as a redundant importer of cyclic GMP-AMP dinucleotides (cGAMPs) in monocyte and macrophage cell lineages. The transport mechanism, its electrogenicity and stoichiometry remain to be elucidated. This is Lysosomal proton-coupled steroid conjugate and bile acid symporter SLC46A3 (Slc46a3) from Mus musculus (Mouse).